Consider the following 311-residue polypeptide: tRNA-cytidine(32) 2-sulfurtransferase (311 aa).

A PP-loop motif motif is present at residues 47-52 (SGGKDS). [4Fe-4S] cluster contacts are provided by Cys122, Cys125, and Cys213.

Belongs to the TtcA family. As to quaternary structure, homodimer. Requires Mg(2+) as cofactor. [4Fe-4S] cluster serves as cofactor.

It localises to the cytoplasm. The enzyme catalyses cytidine(32) in tRNA + S-sulfanyl-L-cysteinyl-[cysteine desulfurase] + AH2 + ATP = 2-thiocytidine(32) in tRNA + L-cysteinyl-[cysteine desulfurase] + A + AMP + diphosphate + H(+). It functions in the pathway tRNA modification. Its function is as follows. Catalyzes the ATP-dependent 2-thiolation of cytidine in position 32 of tRNA, to form 2-thiocytidine (s(2)C32). The sulfur atoms are provided by the cysteine/cysteine desulfurase (IscS) system. This Citrobacter koseri (strain ATCC BAA-895 / CDC 4225-83 / SGSC4696) protein is tRNA-cytidine(32) 2-sulfurtransferase.